Consider the following 205-residue polypeptide: Ras-related protein Rab-1A (205 aa).

Residues 18–26, 36–43, 66–70, 124–127, and 154–156 each bind GTP; these read GDSGVGKSC, YTESYIST, DTAGQ, NKSD, and SAK. An Effector region motif is present at residues 40–48; the sequence is YISTIGVDF. Residues 183-198 show a composition bias toward polar residues; it reads SDSKPSVKINSSTPVS. The interval 183 to 205 is disordered; the sequence is SDSKPSVKINSSTPVSANKGGCC. Residues cysteine 204 and cysteine 205 are each lipidated (S-geranylgeranyl cysteine).

It belongs to the small GTPase superfamily. Rab family.

It localises to the golgi apparatus. It is found in the endoplasmic reticulum. Probably required for transit of protein from the ER through Golgi compartment. The protein is Ras-related protein Rab-1A (RAB1A) of Lymnaea stagnalis (Great pond snail).